A 97-amino-acid chain; its full sequence is YcgL domain-containing protein PputW619_3899 (97 aa).

Residues 3–87 enclose the YcgL domain; sequence RICSIYKSPR…AEDEYIEHLP (85 aa).

The chain is YcgL domain-containing protein PputW619_3899 from Pseudomonas putida (strain W619).